Consider the following 288-residue polypeptide: Probable prolyl 4-hydroxylase 9 (288 aa).

The Cytoplasmic segment spans residues 1 to 12 (MKSRLKSYRRKK). The chain crosses the membrane as a helical; Signal-anchor for type II membrane protein span at residues 13-33 (LGLATVIVFCSLCFLFGFYGS). Over 34-288 (TLLSQNVPRV…KWIRDQDQEE (255 aa)) the chain is Lumenal. In terms of domain architecture, Fe2OG dioxygenase spans 164–283 (HGESFNILRY…KWVATKWIRD (120 aa)). Residues His182 and Asp184 each coordinate Fe cation. Residues Asn221 and Asn255 are each glycosylated (N-linked (GlcNAc...) asparagine). Residue His264 participates in Fe cation binding. 2-oxoglutarate is bound at residue Lys274.

It belongs to the P4HA family. The cofactor is Fe(2+). L-ascorbate serves as cofactor.

The protein localises to the endoplasmic reticulum membrane. It is found in the golgi apparatus. The enzyme catalyses L-prolyl-[collagen] + 2-oxoglutarate + O2 = trans-4-hydroxy-L-prolyl-[collagen] + succinate + CO2. Functionally, catalyzes the post-translational formation of 4-hydroxyproline in -Xaa-Pro-Gly- sequences in proline-rich peptide sequences of plant glycoproteins and other proteins. Hydroxyprolines are important constituent of many plant cell wall glycoproteins such as extensins, hydroxyproline-rich glycoproteins, lectins and arabinogalactan proteins. The protein is Probable prolyl 4-hydroxylase 9 of Arabidopsis thaliana (Mouse-ear cress).